A 297-amino-acid polypeptide reads, in one-letter code: 3-mercaptopyruvate sulfurtransferase (297 aa).

An N-acetylalanine modification is found at Ala2. In terms of domain architecture, Rhodanese 1 spans 25–144 (ASQPLKLLDA…WLSQNLPISS (120 aa)). Ser35 carries the post-translational modification Phosphoserine. Lys40 is subject to N6-acetyllysine; alternate. N6-succinyllysine; alternate is present on Lys40. The hinge stretch occupies residues 145 to 160 (GKSPSEPAEFCAQLDP). N6-succinyllysine is present on residues Lys146 and Lys164. Residues 174–288 (DARRFQVVDA…WYMRAQPEHV (115 aa)) enclose the Rhodanese 2 domain. Residue Arg188 coordinates substrate. The active-site Cysteine persulfide intermediate is Cys248.

Monomer (active form). Homodimer; disulfide-linked (inactive form). Post-translationally, the N-terminus is blocked. Expressed in liver, heart, kidney and brain. Localizes to tubular epithelium in the kidney, pericentral hepatocytes in the liver, cardiac cells in the heart and neuroglial cells in the brain. Also expressed in vascular endothelium of the thoracic aorta. Weak expression in lung and thymus.

The protein resides in the cytoplasm. Its subcellular location is the mitochondrion. The protein localises to the synapse. It localises to the synaptosome. It catalyses the reaction 2-oxo-3-sulfanylpropanoate + [thioredoxin]-dithiol = [thioredoxin]-disulfide + hydrogen sulfide + pyruvate + H(+). Its activity is regulated as follows. By oxidative stress, and thioredoxin. Under oxidative stress conditions, the catalytic cysteine site is converted to a sulfenate which inhibits the MPST enzyme activity. Reduced thioredoxin cleaves an intersubunit disulfide bond to turn on the redox switch and reactivate the enzyme. Inhibited by different oxidants, hydrogen peroxide and tetrathionate. Its function is as follows. Transfer of a sulfur ion to cyanide or to other thiol compounds. Also has weak rhodanese activity. Detoxifies cyanide and is required for thiosulfate biosynthesis. Acts as an antioxidant. In combination with cysteine aminotransferase (CAT), contributes to the catabolism of cysteine and is an important producer of hydrogen sulfide in the brain, retina and vascular endothelial cells. Hydrogen sulfide H(2)S is an important synaptic modulator, signaling molecule, smooth muscle contractor and neuroprotectant. Its production by the 3MST/CAT pathway is regulated by calcium ions. The protein is 3-mercaptopyruvate sulfurtransferase (Mpst) of Rattus norvegicus (Rat).